The following is a 226-amino-acid chain: 6-carboxyhexanoate--CoA ligase (226 aa).

This sequence belongs to the BioW family. Homodimer. It depends on Mg(2+) as a cofactor.

It carries out the reaction heptanedioate + ATP + CoA = 6-carboxyhexanoyl-CoA + AMP + diphosphate. It functions in the pathway metabolic intermediate metabolism; pimeloyl-CoA biosynthesis; pimeloyl-CoA from pimelate: step 1/1. Catalyzes the transformation of pimelate into pimeloyl-CoA with concomitant hydrolysis of ATP to AMP. This chain is 6-carboxyhexanoate--CoA ligase, found in Methanocaldococcus infernus (strain DSM 11812 / JCM 15783 / ME).